We begin with the raw amino-acid sequence, 357 residues long: DNA integrity scanning protein DisA (357 aa).

The 139-residue stretch at 3–141 (RPTLRETVAR…GGERHVVADS (139 aa)) folds into the DAC domain. Residues Gly-70, Leu-88, and 101-105 (TRHRS) each bind ATP.

Belongs to the DisA family. In terms of assembly, homooctamer. Requires Mg(2+) as cofactor.

It catalyses the reaction 2 ATP = 3',3'-c-di-AMP + 2 diphosphate. Its function is as follows. Participates in a DNA-damage check-point. DisA forms globular foci that rapidly scan along the chromosomes searching for lesions. In terms of biological role, also has diadenylate cyclase activity, catalyzing the condensation of 2 ATP molecules into cyclic di-AMP (c-di-AMP). c-di-AMP likely acts as a signaling molecule that may couple DNA integrity with a cellular process. The protein is DNA integrity scanning protein DisA of Mycobacterium avium (strain 104).